The chain runs to 870 residues: DNA mismatch repair protein MutS (870 aa).

616 to 623 (GPNMAGKS) is a binding site for ATP.

The protein belongs to the DNA mismatch repair MutS family.

This protein is involved in the repair of mismatches in DNA. It is possible that it carries out the mismatch recognition step. This protein has a weak ATPase activity. This is DNA mismatch repair protein MutS from Parabacteroides distasonis (strain ATCC 8503 / DSM 20701 / CIP 104284 / JCM 5825 / NCTC 11152).